A 445-amino-acid polypeptide reads, in one-letter code: Histamine H3 receptor (445 aa).

Residues 1 to 39 (MERAPPDGLMNASGTLAGEAAAAGGARGFSAAWTAVLAA) lie on the Extracellular side of the membrane. Residue Asn11 is glycosylated (N-linked (GlcNAc...) asparagine). Residues 40–60 (LMALLIVATVLGNALVMLAFV) form a helical membrane-spanning segment. Over 61–70 (ADSSLRTQNN) the chain is Cytoplasmic. Residues 71-91 (FFLLNLAISDFLVGAFCIPLY) traverse the membrane as a helical segment. The Extracellular portion of the chain corresponds to 92–108 (VPYVLTGRWTFGRGLCK). Residues Cys107 and Cys188 are joined by a disulfide bond. The helical transmembrane segment at 109-129 (LWLVVDYLLCASSVFNIVLIS) threads the bilayer. Topologically, residues 130–156 (YDRFLSVTRAVSYRAQQGDTRRAVRKM) are cytoplasmic. Residues 157-177 (ALVWVLAFLLYGPAILSWEYL) form a helical membrane-spanning segment. Residues 178-196 (SGGSSIPEGHCYAEFFYNW) are Extracellular-facing. A helical transmembrane segment spans residues 197-217 (YFLITASTLEFFTPFLSVTFF). Over 218-359 (NLSIYLNIQR…LSRDKKVAKS (142 aa)) the chain is Cytoplasmic. Disordered stretches follow at residues 234-259 (DGGR…PSCW) and 286-336 (AGEA…LEKR). The segment covering 241–256 (PEPPPDAQPSPPPAPP) has biased composition (pro residues). Residues 290-299 (ALGGGSGGGA) are compositionally biased toward gly residues. Residues 300 to 312 (AASPTSSSGSSSR) show a composition bias toward low complexity. A helical transmembrane segment spans residues 360-380 (LAIIVSIFGLCWAPYTLLMII). The Extracellular portion of the chain corresponds to 381–396 (RAACHGRCIPDYWYET). The chain crosses the membrane as a helical span at residues 397–417 (SFWLLWANSAVNPVLYPLCHY). The Cytoplasmic portion of the chain corresponds to 418–445 (SFRRAFTKLLCPQKLKVQPHGSLEQCWK). Ser439 is subject to Phosphoserine.

Belongs to the G-protein coupled receptor 1 family. In terms of tissue distribution, expressed abundantly in brain, most notably throughout the thalamus, the ventromedial hypothalamus and the caudate nucleus. Isoform 1 is largely predominant in all tissues.

The protein localises to the cell membrane. The H3 subclass of histamine receptors could mediate the histamine signals in CNS and peripheral nervous system. Signals through the inhibition of adenylate cyclase and displays high constitutive activity (spontaneous activity in the absence of agonist). The polypeptide is Histamine H3 receptor (Hrh3) (Rattus norvegicus (Rat)).